The primary structure comprises 144 residues: Catabolic 3-dehydroquinase 1 (144 aa).

The active-site Proton acceptor is the Tyr24. Residues Asn75, His81, and Asp88 each coordinate substrate. His101 (proton donor) is an active-site residue. Substrate-binding positions include 102–103 (IS) and Arg112.

It belongs to the type-II 3-dehydroquinase family. Homododecamer. Adopts a ring-like structure, composed of an arrangement of two hexameric rings stacked on top of one another.

The catalysed reaction is 3-dehydroquinate = 3-dehydroshikimate + H2O. It functions in the pathway aromatic compound metabolism; 3,4-dihydroxybenzoate biosynthesis; 3,4-dihydroxybenzoate from 3-dehydroquinate: step 1/2. Functionally, is involved in the catabolism of quinate. Allows the utilization of quinate as carbon source via the beta-ketoadipate pathway. This Fusarium vanettenii (strain ATCC MYA-4622 / CBS 123669 / FGSC 9596 / NRRL 45880 / 77-13-4) (Fusarium solani subsp. pisi) protein is Catabolic 3-dehydroquinase 1.